We begin with the raw amino-acid sequence, 464 residues long: UDP-N-acetylmuramoylalanine--D-glutamate ligase (464 aa).

127–133 is an ATP binding site; the sequence is GSNGKST.

It belongs to the MurCDEF family.

It localises to the cytoplasm. The enzyme catalyses UDP-N-acetyl-alpha-D-muramoyl-L-alanine + D-glutamate + ATP = UDP-N-acetyl-alpha-D-muramoyl-L-alanyl-D-glutamate + ADP + phosphate + H(+). It functions in the pathway cell wall biogenesis; peptidoglycan biosynthesis. Its function is as follows. Cell wall formation. Catalyzes the addition of glutamate to the nucleotide precursor UDP-N-acetylmuramoyl-L-alanine (UMA). The protein is UDP-N-acetylmuramoylalanine--D-glutamate ligase of Dinoroseobacter shibae (strain DSM 16493 / NCIMB 14021 / DFL 12).